Consider the following 167-residue polypeptide: SsrA-binding protein (167 aa).

Positions 139 to 167 (QAHDKRHAEKEREWQRDKQRIMRAHNRNA) are disordered. A compositionally biased stretch (basic and acidic residues) spans 144–158 (RHAEKEREWQRDKQR).

The protein belongs to the SmpB family.

Its subcellular location is the cytoplasm. Required for rescue of stalled ribosomes mediated by trans-translation. Binds to transfer-messenger RNA (tmRNA), required for stable association of tmRNA with ribosomes. tmRNA and SmpB together mimic tRNA shape, replacing the anticodon stem-loop with SmpB. tmRNA is encoded by the ssrA gene; the 2 termini fold to resemble tRNA(Ala) and it encodes a 'tag peptide', a short internal open reading frame. During trans-translation Ala-aminoacylated tmRNA acts like a tRNA, entering the A-site of stalled ribosomes, displacing the stalled mRNA. The ribosome then switches to translate the ORF on the tmRNA; the nascent peptide is terminated with the 'tag peptide' encoded by the tmRNA and targeted for degradation. The ribosome is freed to recommence translation, which seems to be the essential function of trans-translation. This Xylella fastidiosa (strain M12) protein is SsrA-binding protein.